Here is a 163-residue protein sequence, read N- to C-terminus: ADP-ribosylation factor-like protein 2-binding protein (163 aa).

Belongs to the ARL2BP family. Found in a complex with ARL2BP, ARL2 and SLC25A6. Found in a complex with ARL2, ARL2BP and SLC25A4. Interacts with STAT2, STAT3 and STAT4. Interacts with GTP-bound ARL2 and ARL3; the complex ARL2-ARL2BP as well as ARL2BP alone, binds to SLC25A4. Interaction with ARL2 may be required for targeting to cilia basal body. Interacts with STAT3; interaction is enhanced with ARL2. As to expression, expressed in retina pigment epithelial cells (at protein level). Widely expressed.

It is found in the cytoplasm. The protein resides in the mitochondrion intermembrane space. Its subcellular location is the cytoskeleton. The protein localises to the microtubule organizing center. It localises to the centrosome. It is found in the nucleus. The protein resides in the spindle. Its subcellular location is the cilium basal body. Its function is as follows. Together with ARL2, plays a role in the nuclear translocation, retention and transcriptional activity of STAT3. May play a role as an effector of ARL2. The chain is ADP-ribosylation factor-like protein 2-binding protein (ARL2BP) from Homo sapiens (Human).